The sequence spans 113 residues: Small ribosomal subunit protein uS17 (113 aa).

This sequence belongs to the universal ribosomal protein uS17 family. As to quaternary structure, part of the 30S ribosomal subunit.

Its function is as follows. One of the primary rRNA binding proteins, it binds specifically to the 5'-end of 16S ribosomal RNA. This chain is Small ribosomal subunit protein uS17, found in Pyrococcus furiosus (strain ATCC 43587 / DSM 3638 / JCM 8422 / Vc1).